An 88-amino-acid chain; its full sequence is Large ribosomal subunit protein bL27 (88 aa).

Residues M1 to L21 are disordered.

Belongs to the bacterial ribosomal protein bL27 family.

The protein is Large ribosomal subunit protein bL27 of Mycobacterium marinum (strain ATCC BAA-535 / M).